The sequence spans 241 residues: Guanosine phosphorylase (241 aa).

This sequence belongs to the PNP/UDP phosphorylase family.

The catalysed reaction is guanosine + phosphate = alpha-D-ribose 1-phosphate + guanine. It catalyses the reaction a purine D-ribonucleoside + phosphate = a purine nucleobase + alpha-D-ribose 1-phosphate. The enzyme catalyses inosine + phosphate = alpha-D-ribose 1-phosphate + hypoxanthine. It carries out the reaction adenosine + phosphate = alpha-D-ribose 1-phosphate + adenine. Its activity is regulated as follows. Activity is higher at low KCl concentrations. Functionally, phosphorylase involved in the non-carboxylating pentose bisphosphate pathway, a nucleoside degradation pathway present in some halophilic archaea. Catalyzes the phosphorolytic cleavage of guanosine to guanine and ribose-1-phosphate (R1P). Exhibits the highest activity toward guanosine, but also shows lower activity against inosine and adenosine. The sequence is that of Guanosine phosphorylase from Halorubrum lacusprofundi (strain ATCC 49239 / DSM 5036 / JCM 8891 / ACAM 34).